Consider the following 181-residue polypeptide: Inner membrane-spanning protein YciB (181 aa).

5 consecutive transmembrane segments (helical) span residues 8 to 28, 53 to 73, 76 to 96, 121 to 141, and 149 to 169; these read FPII…ATAA, ITLI…NAIF, WKPT…HFFG, LSWA…VYNF, and FKLF…AFYI.

Belongs to the YciB family.

It localises to the cell inner membrane. Its function is as follows. Plays a role in cell envelope biogenesis, maintenance of cell envelope integrity and membrane homeostasis. This chain is Inner membrane-spanning protein YciB, found in Coxiella burnetii (strain CbuK_Q154) (Coxiella burnetii (strain Q154)).